We begin with the raw amino-acid sequence, 688 residues long: MAQDLLLEIGVEEMPSAYMPRVLKDLKDLAQKNLAEARLSCGEVLTLGTPRRLCLWVKEISEEQEDSLLENRGPKKSIAFDANGNPSKAGLGFARSQGVDFRELQIREVSGVEYLFAIKKEKGQAAEQILPGLLLKVIHSLSFPKSMTWSYYQTRFARPIRWLLAIFGDKNVEFNIENIKSANYTYGHRFLSTGVLLVTSIDDYFRVLREHYVILDQAERKKMIWQQVQKVAGEAGGKAMENEELLEEVAFLVEFPTAFYGEFSPSYLDVPPEVLTTSMIEHQRYFPVYNNEGRLLPGFVGVRNGTDYCLDIVRAGNERVLKARLEDALFFWNEDSRKSLEEMSAKLKNVLFHERLGTLADKVLRLQKLALFIGQQTGLGQPEKLQRSALLCKADLMSNMVYEFPELQGIMGRYYASGSAEEPEVAEAIFEHYLPRFAGDKLPSSAGGIVLSLAEKMDNLMGCFSIGIKPSGSQDPYALRRQALGLVNIILDKKLSIDLKLVFEQAYLGYKDIDLEKSREDSVKELLDFIYQRMRGVLLDNGISYDVVDAALSRPSFDLFETYYRAFKLQEFKKSPVFEDFMVVYNRVHNLSRKWESEEIDLDLLVDESEKNLCQKLPGLQEDIKKSLIAQDYTRALELLAALRADIDQFFTAVMVMVDDERLKAARLGILKSIANMFNSIADFSKIV.

Belongs to the class-II aminoacyl-tRNA synthetase family. In terms of assembly, tetramer of two alpha and two beta subunits.

The protein resides in the cytoplasm. It carries out the reaction tRNA(Gly) + glycine + ATP = glycyl-tRNA(Gly) + AMP + diphosphate. In Syntrophomonas wolfei subsp. wolfei (strain DSM 2245B / Goettingen), this protein is Glycine--tRNA ligase beta subunit.